Consider the following 136-residue polypeptide: Protein NrdI (136 aa).

The protein belongs to the NrdI family.

Its function is as follows. Probably involved in ribonucleotide reductase function. The chain is Protein NrdI from Shigella boydii serotype 4 (strain Sb227).